The sequence spans 684 residues: PAN2-PAN3 deadenylation complex subunit PAN3 (684 aa).

Disordered stretches follow at residues 1 to 38 (MLPPPKSAAVQIVRPPSPSSEKAKEKEKKHSPEKRETA), 68 to 97 (DPSTPQNSSPVAHAPTPSAPTPLAGTPARE), and 112 to 146 (VPKGLDSSPRASTPSVPTPSAPTPPVWPSLPSTGL). The span at 21–38 (EKAKEKEKKHSPEKRETA) shows a compositional bias: basic and acidic residues. Residues 36–65 (ETAQRICRNVMIYGYCKYQDQGCIYYHPPA) form a C3H1-type zinc finger. Residues 127–139 (VPTPSAPTPPVWP) are compositionally biased toward pro residues. The tract at residues 263 to 544 (GANGASAPGL…SIDEVVKMMG (282 aa)) is pseudokinase domain. ATP-binding positions include Arg-326 and 375–382 (DYHPLSTT). Positions 387–412 (YLSPNPPEPSPASALANQPPKRRSSP) are disordered. 444-445 (SK) contributes to the ATP binding site. The stretch at 545–583 (PRILNELDAVQSYADVLENELGAEVENGRIVRLLTKLGF) forms a coiled coil. Residues 584–684 (INERAEFELD…NAGNNHRVHR (101 aa)) are knob domain.

It belongs to the protein kinase superfamily. PAN3 family. As to quaternary structure, homodimer. Forms a heterotrimer with a catalytic subunit PAN2 to form the poly(A)-nuclease (PAN) deadenylation complex. Interacts (via PAM-2 motif) with poly(A)-binding protein PAB1 (via PABC domain), conferring substrate specificity of the enzyme complex.

It localises to the cytoplasm. In terms of biological role, regulatory subunit of the poly(A)-nuclease (PAN) deadenylation complex, one of two cytoplasmic mRNA deadenylases involved in mRNA turnover. PAN specifically shortens poly(A) tails of RNA and the activity is stimulated by poly(A)-binding protein PAB1. PAN deadenylation is followed by rapid degradation of the shortened mRNA tails by the CCR4-NOT complex. Deadenylated mRNAs are then degraded by two alternative mechanisms, namely exosome-mediated 3'-5' exonucleolytic degradation, or deadenylation-dependent mRNA decaping and subsequent 5'-3' exonucleolytic degradation by XRN1. May also be involved in post-transcriptional maturation of mRNA poly(A) tails. PAN3 acts as a positive regulator for PAN activity, recruiting the catalytic subunit PAN2 to mRNA via its interaction with RNA and with PAB1. In Cryptococcus neoformans var. neoformans serotype D (strain B-3501A) (Filobasidiella neoformans), this protein is PAN2-PAN3 deadenylation complex subunit PAN3.